Reading from the N-terminus, the 862-residue chain is Leucine--tRNA ligase (862 aa).

Residues 51-61 (PYPSGSLHMGH) carry the 'HIGH' region motif. Residues 624 to 628 (KMSKS) carry the 'KMSKS' region motif. K627 contacts ATP.

Belongs to the class-I aminoacyl-tRNA synthetase family.

It is found in the cytoplasm. The enzyme catalyses tRNA(Leu) + L-leucine + ATP = L-leucyl-tRNA(Leu) + AMP + diphosphate. This Prochlorococcus marinus (strain NATL2A) protein is Leucine--tRNA ligase.